Reading from the N-terminus, the 340-residue chain is MNKTAEELLDSLKCASDGLASALTSVTLKFNCAFISTIVLISYCFSWLAIQALWNNNIFSNSTRLILIVCLLNSVVHQTTVMETRITQIYRSIVFASEPCEILFRSSECEIELYFYYLTNYFSTYSVFSLTFDRLISHYKSKYYHMHQYFIAISLLVLQFLLAILSFYIAYHGVPLAGYVPMCNYYPKMAVHHITINDVRTVVMVSCIIVTGFAYYLSVKSEKQIQKCSYSPGERYSAYENVTTSQSVCILIVLQFSCTMISSFGVNLLLMMQEAVSEETFTKVGAFLPGVAYANLCLPLAIYFKTKLTIQNRKLRIAVMISMYGDVGEHIARLKKSWEY.

Helical transmembrane passes span 34–54, 114–136, 150–170, 199–219, 250–270, and 284–304; these read FIST…QALW, YFYY…DRLI, FIAI…FYIA, VRTV…YLSV, ILIV…NLLL, and VGAF…AIYF.

The protein belongs to the nematode receptor-like protein sra family.

It localises to the membrane. The polypeptide is Serpentine receptor class alpha-23 (sra-23) (Caenorhabditis elegans).